A 673-amino-acid chain; its full sequence is UvrABC system protein B (673 aa).

Positions 26-183 (ANFEAGLAKQ…RHLTDLQYTR (158 aa)) constitute a Helicase ATP-binding domain. Position 39-46 (39-46 (GVTGSGKT)) interacts with ATP. The Beta-hairpin motif lies at 92 to 115 (YYDYYQPEAYVPSSDTFIEKDSSI). Positions 431–597 (QVDDLMSEIH…SVERPISDIM (167 aa)) constitute a Helicase C-terminal domain. Residues 601–631 (REDAAEKKSGKGRSKSRQVAEETPDYRAMKP) form a disordered region. Positions 618 to 630 (QVAEETPDYRAMK) are enriched in basic and acidic residues. The UVR domain occupies 635-670 (AGKLKSLEQKMYQHAKDLEFEAAAQIRDQIQKLKTA).

Belongs to the UvrB family. Forms a heterotetramer with UvrA during the search for lesions. Interacts with UvrC in an incision complex.

The protein resides in the cytoplasm. In terms of biological role, the UvrABC repair system catalyzes the recognition and processing of DNA lesions. A damage recognition complex composed of 2 UvrA and 2 UvrB subunits scans DNA for abnormalities. Upon binding of the UvrA(2)B(2) complex to a putative damaged site, the DNA wraps around one UvrB monomer. DNA wrap is dependent on ATP binding by UvrB and probably causes local melting of the DNA helix, facilitating insertion of UvrB beta-hairpin between the DNA strands. Then UvrB probes one DNA strand for the presence of a lesion. If a lesion is found the UvrA subunits dissociate and the UvrB-DNA preincision complex is formed. This complex is subsequently bound by UvrC and the second UvrB is released. If no lesion is found, the DNA wraps around the other UvrB subunit that will check the other stand for damage. The sequence is that of UvrABC system protein B from Xanthomonas oryzae pv. oryzae (strain PXO99A).